The sequence spans 183 residues: MDGIIPVVEKKDFLRWFLKEFTLKKRECSWLLNYLMSDDDLMENVHFVEEAERCPKALIMSTNDVHTVPFCFHKYQQVTMDAEKAFHDIRMNPEEAIYIQLHFSGAKHNPNYIAVLEDNPYVPENEDLIAKQKKLAEAFLERSVQSFEEKELLRRIDEALDARDKETFLTLSQQLQHLRQHSD.

It belongs to the UPF0302 family.

This chain is UPF0302 protein BH1670, found in Halalkalibacterium halodurans (strain ATCC BAA-125 / DSM 18197 / FERM 7344 / JCM 9153 / C-125) (Bacillus halodurans).